The sequence spans 527 residues: T-complex protein 1 subunit delta (527 aa).

Belongs to the TCP-1 chaperonin family. Heterooligomeric complex of about 850 to 900 kDa that forms two stacked rings, 12 to 16 nm in diameter.

Its subcellular location is the cytoplasm. Functionally, molecular chaperone; assists the folding of proteins upon ATP hydrolysis. Known to play a role, in vitro, in the folding of actin and tubulin. This is T-complex protein 1 subunit delta (cct4) from Schizosaccharomyces pombe (strain 972 / ATCC 24843) (Fission yeast).